The chain runs to 101 residues: NADH-quinone oxidoreductase subunit K (101 aa).

A run of 3 helical transmembrane segments spans residues L4–L24, I30–F50, and F65–F85.

It belongs to the complex I subunit 4L family. In terms of assembly, NDH-1 is composed of 14 different subunits. Subunits NuoA, H, J, K, L, M, N constitute the membrane sector of the complex.

The protein localises to the cell inner membrane. The catalysed reaction is a quinone + NADH + 5 H(+)(in) = a quinol + NAD(+) + 4 H(+)(out). In terms of biological role, NDH-1 shuttles electrons from NADH, via FMN and iron-sulfur (Fe-S) centers, to quinones in the respiratory chain. The immediate electron acceptor for the enzyme in this species is believed to be ubiquinone. Couples the redox reaction to proton translocation (for every two electrons transferred, four hydrogen ions are translocated across the cytoplasmic membrane), and thus conserves the redox energy in a proton gradient. The protein is NADH-quinone oxidoreductase subunit K of Ruegeria pomeroyi (strain ATCC 700808 / DSM 15171 / DSS-3) (Silicibacter pomeroyi).